Consider the following 428-residue polypeptide: 3-phosphoshikimate 1-carboxyvinyltransferase (428 aa).

3-phosphoshikimate contacts are provided by K23, S24, and R28. K23 provides a ligand contact to phosphoenolpyruvate. Phosphoenolpyruvate contacts are provided by G97 and R125. 3-phosphoshikimate-binding residues include S170, S171, Q172, S198, D314, N337, and K341. Q172 is a phosphoenolpyruvate binding site. D314 (proton acceptor) is an active-site residue. Phosphoenolpyruvate is bound by residues R345, R387, and K412.

It belongs to the EPSP synthase family. In terms of assembly, monomer.

The protein localises to the cytoplasm. The enzyme catalyses 3-phosphoshikimate + phosphoenolpyruvate = 5-O-(1-carboxyvinyl)-3-phosphoshikimate + phosphate. It participates in metabolic intermediate biosynthesis; chorismate biosynthesis; chorismate from D-erythrose 4-phosphate and phosphoenolpyruvate: step 6/7. In terms of biological role, catalyzes the transfer of the enolpyruvyl moiety of phosphoenolpyruvate (PEP) to the 5-hydroxyl of shikimate-3-phosphate (S3P) to produce enolpyruvyl shikimate-3-phosphate and inorganic phosphate. In Buchnera aphidicola subsp. Schizaphis graminum (strain Sg), this protein is 3-phosphoshikimate 1-carboxyvinyltransferase.